The chain runs to 333 residues: Tryptophan--tRNA ligase (333 aa).

Residues 9–11 (QPT) and 17–18 (GN) each bind ATP. The 'HIGH' region motif lies at 10-18 (PTNNLTLGN). Asp140 serves as a coordination point for L-tryptophan. ATP contacts are provided by residues 152–154 (GQD), Ile191, and 200–204 (KMSKS). Residues 200-204 (KMSKS) carry the 'KMSKS' region motif.

The protein belongs to the class-I aminoacyl-tRNA synthetase family. Homodimer.

It localises to the cytoplasm. The enzyme catalyses tRNA(Trp) + L-tryptophan + ATP = L-tryptophyl-tRNA(Trp) + AMP + diphosphate + H(+). Functionally, catalyzes the attachment of tryptophan to tRNA(Trp). This chain is Tryptophan--tRNA ligase, found in Ureaplasma parvum serovar 3 (strain ATCC 700970).